Here is a 780-residue protein sequence, read N- to C-terminus: Replication origin-binding protein (780 aa).

Residues 39 to 195 (SFENVRQPIK…AAFKPDTQIA (157 aa)) form the Helicase ATP-binding domain. 52-59 (AAMGSGKT) is a binding site for ATP.

This sequence belongs to the herpesviridae OriBP family.

In terms of biological role, probably involved in DNA replication. Binds the origin of replication (ori). In Human herpesvirus 6A (strain Uganda-1102) (HHV-6 variant A), this protein is Replication origin-binding protein (U73).